The primary structure comprises 154 residues: Endoribonuclease YbeY (154 aa).

Zn(2+)-binding residues include H117, H121, and H127.

It belongs to the endoribonuclease YbeY family. Requires Zn(2+) as cofactor.

The protein resides in the cytoplasm. In terms of biological role, single strand-specific metallo-endoribonuclease involved in late-stage 70S ribosome quality control and in maturation of the 3' terminus of the 16S rRNA. This chain is Endoribonuclease YbeY, found in Polaromonas sp. (strain JS666 / ATCC BAA-500).